The sequence spans 454 residues: Prenyltransferase nscD (454 aa).

It belongs to the tryptophan dimethylallyltransferase family.

The protein operates within secondary metabolite biosynthesis. In terms of biological role, prenyltransferase; part of the gene cluster that mediates the biosynthesis of neosartoricin, a prenylated anthracenone that exhibits T-cell antiproliferative activity, suggestive of a physiological role as an immunosuppressive agent. The non-reducing polyketide synthase nscA probably synthesizes and cyclizes the decaketide backbone. The hydrolase nscB then mediates the product release through hydrolysis followed by spontaneous decarboxylation. The prenyltransferase nscD catalyzes the addition of the dimethylallyl group to the aromatic C5. The FAD-dependent monooxygenase nscC is then responsible for the stereospecific hydroxylation at C2. There is no gene encoding O-acetyltransferase in the nsc gene cluster; thus, the last step of 2-O-acetylation leading to neosartoricin may be catalyzed by an unidentified O-acetyltransferase. In Neosartorya fischeri (strain ATCC 1020 / DSM 3700 / CBS 544.65 / FGSC A1164 / JCM 1740 / NRRL 181 / WB 181) (Aspergillus fischerianus), this protein is Prenyltransferase nscD.